The chain runs to 164 residues: Ribonuclease P protein component 2 (164 aa).

Belongs to the eukaryotic/archaeal RNase P protein component 2 family. As to quaternary structure, consists of a catalytic RNA component and at least 4-5 protein subunits.

The protein localises to the cytoplasm. The enzyme catalyses Endonucleolytic cleavage of RNA, removing 5'-extranucleotides from tRNA precursor.. Functionally, part of ribonuclease P, a protein complex that generates mature tRNA molecules by cleaving their 5'-ends. The sequence is that of Ribonuclease P protein component 2 from Halobacterium salinarum (strain ATCC 29341 / DSM 671 / R1).